We begin with the raw amino-acid sequence, 129 residues long: Small ribosomal subunit protein uS11 (129 aa).

Belongs to the universal ribosomal protein uS11 family. In terms of assembly, part of the 30S ribosomal subunit. Interacts with proteins S7 and S18. Binds to IF-3.

Its function is as follows. Located on the platform of the 30S subunit, it bridges several disparate RNA helices of the 16S rRNA. Forms part of the Shine-Dalgarno cleft in the 70S ribosome. This Nitratidesulfovibrio vulgaris (strain DSM 19637 / Miyazaki F) (Desulfovibrio vulgaris) protein is Small ribosomal subunit protein uS11.